We begin with the raw amino-acid sequence, 377 residues long: Progesterone receptor (377 aa).

The modulating, Pro-Rich stretch occupies residues 1–15 (EASQSPQYSFESLPQ). Residues 16–90 (KICLICGDEA…AGMVLGGRKF (75 aa)) constitute a DNA-binding region (nuclear receptor). NR C4-type zinc fingers lie at residues 18 to 38 (CLIC…CGSC) and 54 to 78 (CAGR…LRKC). Serine 127 is subject to Phosphoserine. The NR LBD domain maps to 130–364 (QDLQLIPPLI…EFPEMMSEVI (235 aa)). The AF2; mediates transcriptional activation stretch occupies residues 138-377 (LINLLMSIEP…LPKILAGMVK (240 aa)).

It belongs to the nuclear hormone receptor family. NR3 subfamily. Interacts with CUEDC2, SMARD1 and with UNC45A. Interacts with PRMT2. Interacts with NCOA2 and NCOA1. Interacts with KLF9. Interacts with GTF2B. In terms of processing, palmitoylated by ZDHHC7 and ZDHHC21. Palmitoylation is required for plasma membrane targeting and for rapid intracellular signaling via ERK and AKT kinases and cAMP generation.

It localises to the nucleus. Functionally, the steroid hormones and their receptors are involved in the regulation of eukaryotic gene expression and affect cellular proliferation and differentiation in target tissues. Transcriptional activator of several progesteron-dependent promoters in a variety of cell types. Involved in activation of SRC-dependent MAPK signaling on hormone stimulation. This chain is Progesterone receptor (PGR), found in Ovis aries (Sheep).